A 250-amino-acid polypeptide reads, in one-letter code: MSDLTSTILFEHPLNEKMRTWLRMEFLLQQLESHRSLDNIANALTFFRTASDLIDVLERGEVRTDLLKELERQQQKLQQWADIPGVDVSLVDSLRNQLKSRAAVLMSAPRIGQSLKEDRLISVVRQRLSIPGGCCSFDLPTLHVWLHQPSEQRDQHINKLLASLAPLHQSLTIILDLIRQSCPLRSQISLNGFFQDNAGGADLLRLRLPLDPQLYPQISGHKTRYAIRFLALDSENGTVPARLSFELACC.

The protein belongs to the ZapD family. Interacts with FtsZ.

The protein localises to the cytoplasm. Cell division factor that enhances FtsZ-ring assembly. Directly interacts with FtsZ and promotes bundling of FtsZ protofilaments, with a reduction in FtsZ GTPase activity. The protein is Cell division protein ZapD of Yersinia pestis bv. Antiqua (strain Antiqua).